We begin with the raw amino-acid sequence, 358 residues long: S-adenosylmethionine:tRNA ribosyltransferase-isomerase (358 aa).

The protein belongs to the QueA family. Monomer.

The protein localises to the cytoplasm. The catalysed reaction is 7-aminomethyl-7-carbaguanosine(34) in tRNA + S-adenosyl-L-methionine = epoxyqueuosine(34) in tRNA + adenine + L-methionine + 2 H(+). It participates in tRNA modification; tRNA-queuosine biosynthesis. In terms of biological role, transfers and isomerizes the ribose moiety from AdoMet to the 7-aminomethyl group of 7-deazaguanine (preQ1-tRNA) to give epoxyqueuosine (oQ-tRNA). This chain is S-adenosylmethionine:tRNA ribosyltransferase-isomerase, found in Chelativorans sp. (strain BNC1).